Here is a 239-residue protein sequence, read N- to C-terminus: Ribonuclease 3 (239 aa).

One can recognise an RNase III domain in the interval histidine 11–aspartate 133. Glutamate 46 is a Mg(2+) binding site. Residue aspartate 50 is part of the active site. Residues aspartate 119 and glutamate 122 each coordinate Mg(2+). The active site involves glutamate 122. The region spanning aspartate 160–glutamate 230 is the DRBM domain.

The protein belongs to the ribonuclease III family. Homodimer. It depends on Mg(2+) as a cofactor.

Its subcellular location is the cytoplasm. The catalysed reaction is Endonucleolytic cleavage to 5'-phosphomonoester.. Digests double-stranded RNA. Involved in the processing of primary rRNA transcript to yield the immediate precursors to the large and small rRNAs (23S and 16S). Processes some mRNAs, and tRNAs when they are encoded in the rRNA operon. Processes pre-crRNA and tracrRNA of type II CRISPR loci if present in the organism. The protein is Ribonuclease 3 of Neisseria gonorrhoeae (strain ATCC 700825 / FA 1090).